A 416-amino-acid chain; its full sequence is Histidine--tRNA ligase (416 aa).

It belongs to the class-II aminoacyl-tRNA synthetase family. As to quaternary structure, homodimer.

The protein resides in the cytoplasm. The enzyme catalyses tRNA(His) + L-histidine + ATP = L-histidyl-tRNA(His) + AMP + diphosphate + H(+). This chain is Histidine--tRNA ligase, found in Clostridium kluyveri (strain NBRC 12016).